The sequence spans 165 residues: Large ribosomal subunit protein uL10 (165 aa).

It belongs to the universal ribosomal protein uL10 family. Part of the ribosomal stalk of the 50S ribosomal subunit. The N-terminus interacts with L11 and the large rRNA to form the base of the stalk. The C-terminus forms an elongated spine to which L12 dimers bind in a sequential fashion forming a multimeric L10(L12)X complex.

Functionally, forms part of the ribosomal stalk, playing a central role in the interaction of the ribosome with GTP-bound translation factors. The sequence is that of Large ribosomal subunit protein uL10 from Borrelia turicatae (strain 91E135).